The primary structure comprises 179 residues: Large ribosomal subunit protein uL5 (179 aa).

The protein belongs to the universal ribosomal protein uL5 family. Part of the 50S ribosomal subunit; part of the 5S rRNA/L5/L18/L25 subcomplex. Contacts the 5S rRNA and the P site tRNA. Forms a bridge to the 30S subunit in the 70S ribosome.

Its function is as follows. This is one of the proteins that bind and probably mediate the attachment of the 5S RNA into the large ribosomal subunit, where it forms part of the central protuberance. In the 70S ribosome it contacts protein S13 of the 30S subunit (bridge B1b), connecting the 2 subunits; this bridge is implicated in subunit movement. Contacts the P site tRNA; the 5S rRNA and some of its associated proteins might help stabilize positioning of ribosome-bound tRNAs. The protein is Large ribosomal subunit protein uL5 of Lachnoclostridium phytofermentans (strain ATCC 700394 / DSM 18823 / ISDg) (Clostridium phytofermentans).